The primary structure comprises 507 residues: Cobyric acid synthase (507 aa).

A GATase cobBQ-type domain is found at 251 to 448; it reads DIDIAVVHLP…LHGLFDSDAF (198 aa). Residue cysteine 332 is the Nucleophile of the active site. Histidine 440 is an active-site residue.

This sequence belongs to the CobB/CobQ family. CobQ subfamily.

It functions in the pathway cofactor biosynthesis; adenosylcobalamin biosynthesis. Functionally, catalyzes amidations at positions B, D, E, and G on adenosylcobyrinic A,C-diamide. NH(2) groups are provided by glutamine, and one molecule of ATP is hydrogenolyzed for each amidation. The polypeptide is Cobyric acid synthase (Klebsiella pneumoniae (strain 342)).